The primary structure comprises 730 residues: Rap1 GTPase-activating protein 2 (730 aa).

The region spanning 247-463 (IVAYDEHEVN…RTRAALLDNL (217 aa)) is the Rap-GAP domain. Disordered stretches follow at residues 510 to 668 (MVGS…STAS) and 698 to 730 (SRSP…STSH). Polar residues-rich tracts occupy residues 535 to 557 (GEVT…QSRS) and 597 to 612 (HSSQ…NPSS). Positions 617–630 (PNKDRPFVKLKENG) are enriched in basic and acidic residues. Positions 631–651 (RSNISRSSSSTSSFSSTAGES) are enriched in low complexity. Polar residues predominate over residues 699-712 (RSPTDIKNRNSPRS).

The protein resides in the cytoplasm. In terms of biological role, GTPase activator for the nuclear Ras-related regulatory protein RAP-1A (KREV-1), converting it to the putatively inactive GDP-bound state. In Gallus gallus (Chicken), this protein is Rap1 GTPase-activating protein 2 (RAP1GAP2).